The chain runs to 823 residues: Valine--tRNA ligase (823 aa).

The short motif at 52 to 62 is the 'HIGH' region element; the sequence is PTVSGVLHMGH. The short motif at 549–553 is the 'KMSKS' region element; sequence KMSKS. Residue Lys552 participates in ATP binding.

Belongs to the class-I aminoacyl-tRNA synthetase family. ValS type 2 subfamily. As to quaternary structure, monomer.

It localises to the cytoplasm. It carries out the reaction tRNA(Val) + L-valine + ATP = L-valyl-tRNA(Val) + AMP + diphosphate. Functionally, catalyzes the attachment of valine to tRNA(Val). As ValRS can inadvertently accommodate and process structurally similar amino acids such as threonine, to avoid such errors, it has a 'posttransfer' editing activity that hydrolyzes mischarged Thr-tRNA(Val) in a tRNA-dependent manner. The sequence is that of Valine--tRNA ligase from Anaplasma marginale (strain St. Maries).